Reading from the N-terminus, the 238-residue chain is Ribonuclease PH (238 aa).

Phosphate contacts are provided by residues R86 and 124-126; that span reads GTR.

Belongs to the RNase PH family. As to quaternary structure, homohexameric ring arranged as a trimer of dimers.

The enzyme catalyses tRNA(n+1) + phosphate = tRNA(n) + a ribonucleoside 5'-diphosphate. Phosphorolytic 3'-5' exoribonuclease that plays an important role in tRNA 3'-end maturation. Removes nucleotide residues following the 3'-CCA terminus of tRNAs; can also add nucleotides to the ends of RNA molecules by using nucleoside diphosphates as substrates, but this may not be physiologically important. Probably plays a role in initiation of 16S rRNA degradation (leading to ribosome degradation) during starvation. The polypeptide is Ribonuclease PH (Psychrobacter sp. (strain PRwf-1)).